The sequence spans 432 residues: Glutamyl-tRNA reductase (432 aa).

Substrate contacts are provided by residues 49-52 (TCNR), Ser-101, 106-108 (ESQ), and Gln-112. The Nucleophile role is filled by Cys-50. 181-186 (GAGETI) contacts NADP(+). The disordered stretch occupies residues 410 to 432 (KPGYHHPTLQTTIVKTDETDPAS).

Belongs to the glutamyl-tRNA reductase family. In terms of assembly, homodimer.

The catalysed reaction is (S)-4-amino-5-oxopentanoate + tRNA(Glu) + NADP(+) = L-glutamyl-tRNA(Glu) + NADPH + H(+). The protein operates within porphyrin-containing compound metabolism; protoporphyrin-IX biosynthesis; 5-aminolevulinate from L-glutamyl-tRNA(Glu): step 1/2. Its function is as follows. Catalyzes the NADPH-dependent reduction of glutamyl-tRNA(Glu) to glutamate 1-semialdehyde (GSA). The sequence is that of Glutamyl-tRNA reductase from Xylella fastidiosa (strain M23).